A 333-amino-acid polypeptide reads, in one-letter code: uncharacterized protein (333 aa).

This sequence to E.coli YfeH.

This is an uncharacterized protein from Pseudomonas aeruginosa (strain ATCC 15692 / DSM 22644 / CIP 104116 / JCM 14847 / LMG 12228 / 1C / PRS 101 / PAO1).